Reading from the N-terminus, the 184-residue chain is MSHETGGADTAQDDEHVVLGRLTSPYGVKGWLKVYSYTSPIEGIFEHAEWVLSKRGERRACKLSQGRPHGKGLVASLEGISSRELAEQWAGADILLPKQALPALAPGDYYWYQLEGLRVETLDGECLGQVNYLFETGANDVLVIRPSEASLDERERLLPFLPDDVIRQVDLDAGRMIVDWDPEF.

In terms of domain architecture, PRC barrel spans 106–184 (PGDYYWYQLE…RMIVDWDPEF (79 aa)).

Belongs to the RimM family. In terms of assembly, binds ribosomal protein uS19.

It localises to the cytoplasm. An accessory protein needed during the final step in the assembly of 30S ribosomal subunit, possibly for assembly of the head region. Essential for efficient processing of 16S rRNA. May be needed both before and after RbfA during the maturation of 16S rRNA. It has affinity for free ribosomal 30S subunits but not for 70S ribosomes. The sequence is that of Ribosome maturation factor RimM from Chromohalobacter salexigens (strain ATCC BAA-138 / DSM 3043 / CIP 106854 / NCIMB 13768 / 1H11).